Here is a 94-residue protein sequence, read N- to C-terminus: Integration host factor subunit beta (94 aa).

It belongs to the bacterial histone-like protein family. In terms of assembly, heterodimer of an alpha and a beta chain.

In terms of biological role, this protein is one of the two subunits of integration host factor, a specific DNA-binding protein that functions in genetic recombination as well as in transcriptional and translational control. The sequence is that of Integration host factor subunit beta from Actinobacillus succinogenes (strain ATCC 55618 / DSM 22257 / CCUG 43843 / 130Z).